A 763-amino-acid polypeptide reads, in one-letter code: MDTRGCAWLLLLLSLPQGQSHQPLHRSKRRWVLTTLELQEEDPGPFPKLVGELFNNMSNNVSLIYLIRGPGVDEFPEIGLFSIEDHQSGKIYVHRPVDREVTPSFMVHFDAVDRSTGKVVDESLIFNIRIRDVNDHAPQFPEKEFNISVKESQAAGQPIFQLLTVDLDQENTPNSQVLYFLVSQTPLLRESGFRIDLISGEVRLSGCLHYETAPLFTLIVRASDCGEPSLTSTATIHVSVEDSNNHMPTFMEDRYEIRISEGQVEQGVLYLPVQDGDSPFTPAWRTQFNIWDGNEEGHFDIVTDPETNQGLLSIIKPLDYESQVAHSLVVVVENQEQLFVCTEGQLQPLRKAMASTMVSVQVLDTNDPPAFHPQSFIVSEEDGAWPAIQLGYFNATDPDRADSQIRYKLVHDPENWVTVDEKSGVVTTKKQIDRESPHVNDSFYTIIVHAVDNGLPPLTGTGTLMLFLSDVNDNAPTLRPHSRHLEVCESAGSQPLLIEAEDADLDPYADPFTFDLDNAQGDVEETWMLRTKQGEGHSAELTMLRSVPPGDYLVPLFIADRQGLAQKQTVHVRICSCRSGSECEEPSDTWLLWWALSPVGAALMVLSAALLCLLRCSCTFGPKRLRGFIPSDSGHQTLIVYNEESKVPSAQGCDTFFEPRGVKTLLSSTPVYLDRMVPRQQPLQLLEGRVVEAWSQKLQSIDVLEGDTGYLPHVYREEGECEGAETLSSLTFLEQDLSPKLLGCSGSKSTPSEAMCFTSRVPS.

Residues 1–20 (MDTRGCAWLLLLLSLPQGQS) form the signal peptide. 4 Cadherin domains span residues 21–140 (HQPL…APQF), 141–250 (PEKE…MPTF), 251–371 (MEDR…PPAF), and 370–478 (AFHP…APTL). Over 21-590 (HQPLHRSKRR…SECEEPSDTW (570 aa)) the chain is Extracellular. Residues Asn-56, Asn-60, and Asn-146 are each glycosylated (N-linked (GlcNAc...) asparagine). Asn-394 and Asn-440 each carry an N-linked (GlcNAc...) asparagine glycan. A helical membrane pass occupies residues 591 to 611 (LLWWALSPVGAALMVLSAALL). Topologically, residues 612–763 (CLLRCSCTFG…AMCFTSRVPS (152 aa)) are cytoplasmic.

In terms of assembly, homodimer. Component of a cadherin:catenin adhesion complex composed of at least of CDH26, beta-catenin/CTNNB1, alpha-catenin/CTNNA1 and p120 catenin/CTNND1. Post-translationally, N-glycosylated.

It localises to the cell membrane. Functionally, cadherins are calcium-dependent cell adhesion proteins. They preferentially interact with themselves in a homophilic manner in connecting cells; cadherins may thus contribute to the sorting of heterogeneous cell types. Ligand for integrins alpha-E/beta-7, ITGAE:ITGAB7, alpha-4/beta-7, ITGA4:ITGAB7 and alpha-4/beta-1, ITGA4:ITGAB1 through which modulates CD4(+) T cells activation. The protein is Cadherin-like protein 26 (Cdh26) of Mus musculus (Mouse).